A 215-amino-acid chain; its full sequence is CASP-like protein 1E1 (215 aa).

The Cytoplasmic portion of the chain corresponds to 1–51; that stretch reads MESSRGKPGLNGSGGGAAAFDYSSRRGYYTGAGAALPPLAAGSRAPPVDPC. A helical transmembrane segment spans residues 52 to 72; that stretch reads CVALRVFVLLGTLASAVVMAA. The Extracellular segment spans residues 73-103; sequence DRQSTTVQIAAGEQLAPPLRVPVTAKWTYSS. Residues 104–124 form a helical membrane-spanning segment; that stretch reads AFVYFVVANAMVFAFSAAALA. The Cytoplasmic segment spans residues 125-130; sequence AVRRRS. Residues 131 to 151 traverse the membrane as a helical segment; the sequence is AVVPVMVGDLVAMALLFSAVG. The Extracellular portion of the chain corresponds to 152-185; it reads AAAQFGLLGERGNAHVRWAKVCDVYGPFCERAMA. A helical membrane pass occupies residues 186 to 206; that stretch reads AVVVALIAAFADLVLLMLTIL. At 207-215 the chain is on the cytoplasmic side; that stretch reads TIHKASSYY.

It belongs to the Casparian strip membrane proteins (CASP) family. Homodimer and heterodimers.

It localises to the cell membrane. This Oryza sativa subsp. indica (Rice) protein is CASP-like protein 1E1.